We begin with the raw amino-acid sequence, 865 residues long: Valine--tRNA ligase (865 aa).

The short motif at 43–53 (PNITGRIHMGH) is the 'HIGH' region element. The 'KMSKS' region signature appears at 523-527 (KMSKS). Residue Lys-526 coordinates ATP. Residues 797-865 (GLIDFEKEKE…RLESILRDLE (69 aa)) adopt a coiled-coil conformation.

This sequence belongs to the class-I aminoacyl-tRNA synthetase family. ValS type 1 subfamily. Monomer.

It localises to the cytoplasm. The catalysed reaction is tRNA(Val) + L-valine + ATP = L-valyl-tRNA(Val) + AMP + diphosphate. Its function is as follows. Catalyzes the attachment of valine to tRNA(Val). As ValRS can inadvertently accommodate and process structurally similar amino acids such as threonine, to avoid such errors, it has a 'posttransfer' editing activity that hydrolyzes mischarged Thr-tRNA(Val) in a tRNA-dependent manner. In Thermotoga maritima (strain ATCC 43589 / DSM 3109 / JCM 10099 / NBRC 100826 / MSB8), this protein is Valine--tRNA ligase.